The primary structure comprises 293 residues: Ribosomal protein L11 methyltransferase (293 aa).

4 residues coordinate S-adenosyl-L-methionine: Thr-145, Gly-166, Asp-188, and Asn-230.

The protein belongs to the methyltransferase superfamily. PrmA family.

The protein resides in the cytoplasm. The enzyme catalyses L-lysyl-[protein] + 3 S-adenosyl-L-methionine = N(6),N(6),N(6)-trimethyl-L-lysyl-[protein] + 3 S-adenosyl-L-homocysteine + 3 H(+). Its function is as follows. Methylates ribosomal protein L11. This is Ribosomal protein L11 methyltransferase from Shewanella putrefaciens (strain CN-32 / ATCC BAA-453).